The chain runs to 500 residues: Versicolorin B desaturase (500 aa).

A helical membrane pass occupies residues 3-23 (FLSLPSLVIVIPVGYLLFHLG). 2 N-linked (GlcNAc...) asparagine glycosylation sites follow: asparagine 243 and asparagine 400. Residue cysteine 438 participates in heme binding.

The protein belongs to the cytochrome P450 family. It depends on heme as a cofactor.

Its subcellular location is the membrane. The enzyme catalyses versicolorin B + NADPH + O2 + H(+) = versicolorin A + NADP(+) + 2 H2O. Its pathway is mycotoxin biosynthesis; aflatoxin biosynthesis. Versicolorin B desaturase; part of the gene cluster that mediates the biosynthesis of aflatoxins, a group of polyketide-derived furanocoumarins, and part of the most toxic and carcinogenic compounds among the known mycotoxins. The four major aflatoxins produced by A.parasiticus are aflatoxin B1 (AFB1), aflatoxin B2 (AFB2), aflatoxin G1 (AFG1) and aflatoxin G2 (AFG2). Within the aflatoxin pathway, the versicolorin B desaturase aflL catalyzes the conversion of versicolorin B (VERB) to versicolorin A (VERA). The biosynthesis of aflatoxins begins with the norsolorinic acid synthase aflC that combines a hexanoyl starter unit produced by the fatty acid synthase aflA/aflB and 7 malonyl-CoA extender units to synthesize the precursor NOR. The second step is the conversion of NOR to averantin and requires the norsolorinic acid ketoreductase aflD, which catalyzes the dehydration of norsolorinic acid to form (1'S)-averantin. The norsolorinic acid reductases aflE and aflF may also play a role in the conversion of NOR to AVN. The cytochrome P450 monooxygenase aflG then catalyzes the hydroxylation of AVN to 5'hydroxyaverantin (HAVN). The next step is performed by the 5'-hydroxyaverantin dehydrogenase aflH that transforms HAVN to 5'-oxoaverantin (OAVN) which is further converted to averufin (AVF) by aflK that plays a dual role in the pathway, as a 5'-oxoaverantin cyclase that mediates conversion of 5'-oxoaverantin, as well as a versicolorin B synthase in a later step in the pathway. The averufin oxidase aflI catalyzes the conversion of AVF to versiconal hemiacetal acetate (VHA). VHA is then the substrate for the versiconal hemiacetal acetate esterase aflJ to yield versiconal (VAL). Versicolorin B synthase aflK then converts VAL to versicolorin B (VERB) by closing the bisfuran ring of aflatoxin which is required for DNA-binding, thus giving to aflatoxin its activity as a mutagen. Then, the activity of the versicolorin B desaturase aflL leads to versicolorin A (VERA). A branch point starts from VERB since it can also be converted to dihydrodemethylsterigmatocystin (DMDHST), probably also by aflL, VERA being a precursor for aflatoxins B1 and G1, and DMDHST for aflatoxins B2 and G2. Next, the versicolorin reductase aflM and the cytochrome P450 monooxygenase aflN are involved in conversion of VERA to demethylsterigmatocystin (DMST). AflX and aflY seem also involved in this step, through probable aflX-mediated epoxide ring-opening step following versicolorin A oxidation and aflY-mediated Baeyer-Villiger oxidation required for the formation of the xanthone ring. The methyltransferase aflO then leads to the modification of DMST to sterigmatocystin (ST), and of DMDHST to dihydrosterigmatocystin (DHST). Both ST and DHST are then substrates of the O-methyltransferase aflP to yield O-methylsterigmatocystin (OMST) and dihydro-O-methylsterigmatocystin (DHOMST), respectively. Finally OMST is converted to aflatoxins B1 and G1, and DHOMST to aflatoxins B2 and G2, via the action of several enzymes including O-methylsterigmatocystin oxidoreductase aflQ, the cytochrome P450 monooxygenase aflU, but also the NADH-dependent flavin oxidoreductase nadA which is specifically required for the synthesis of AFG1. The protein is Versicolorin B desaturase of Aspergillus parasiticus (strain ATCC 56775 / NRRL 5862 / SRRC 143 / SU-1).